A 950-amino-acid polypeptide reads, in one-letter code: Protocadherin alpha-8 (950 aa).

The first 29 residues, methionine 1–glycine 29, serve as a signal peptide directing secretion. 6 Cadherin domains span residues glutamine 30–phenylalanine 133, alanine 157–phenylalanine 242, glutamate 243–isoleucine 350, alanine 351–phenylalanine 455, alanine 456–leucine 565, and valine 581–alanine 678. At glutamine 30–asparagine 697 the chain is on the extracellular side. Residues asparagine 257 and asparagine 265 are each glycosylated (N-linked (GlcNAc...) asparagine). A glycan (N-linked (GlcNAc...) asparagine) is linked at asparagine 548. The chain crosses the membrane as a helical span at residues valine 698–tyrosine 718. Residues threonine 719–glutamine 950 lie on the Cytoplasmic side of the membrane. 5 PXXP repeats span residues proline 774 to proline 777, proline 799 to proline 802, proline 832 to proline 835, proline 873 to proline 876, and proline 891 to proline 894. The interval proline 774–proline 894 is 5 X 4 AA repeats of P-X-X-P. The disordered stretch occupies residues glycine 831 to glutamine 950. The segment covering aspartate 909–lysine 923 has biased composition (basic and acidic residues).

It localises to the cell membrane. In terms of biological role, potential calcium-dependent cell-adhesion protein. May be involved in the establishment and maintenance of specific neuronal connections in the brain. The protein is Protocadherin alpha-8 (PCDHA8) of Pan troglodytes (Chimpanzee).